A 472-amino-acid polypeptide reads, in one-letter code: Arabinose-proton symporter (472 aa).

At 1–29 (MVTINTESALTPRSLRDTRRMNMFVSVAA) the chain is on the cytoplasmic side. A helical transmembrane segment spans residues 30–50 (AVAGLLFGLDIGVIAGALPFI). The Periplasmic portion of the chain corresponds to 51-63 (TDHFVLTSRLQEW). The chain crosses the membrane as a helical span at residues 64–84 (VVSSMMLGAAIGALFNGWLSF). At 85–91 (RLGRKYS) the chain is on the cytoplasmic side. A helical membrane pass occupies residues 92-112 (LMAGAILFVLGSIGSAFATSV). The Periplasmic segment spans residues 113–114 (EM). Residues 115-135 (LIAARVVLGIAVGIASYTAPL) traverse the membrane as a helical segment. Residues 136-154 (YLSEMASENVRGKMISMYQ) lie on the Cytoplasmic side of the membrane. Residues 155-175 (LMVTLGIVLAFLSDTAFSYSG) form a helical membrane-spanning segment. At 176–178 (NWR) the chain is on the periplasmic side. Residues 179–199 (AMLGVLALPAVLLIILVVFLP) form a helical membrane-spanning segment. The Cytoplasmic segment spans residues 200 to 257 (NSPRWLAEKGRHIEAEEVLRMLRDTSEKAREELNEIRESLKLKQGGWALFKINRNVRR). A helical membrane pass occupies residues 258–278 (AVFLGMLLQAMQQFTGMNIIM). Topologically, residues 279 to 297 (YYAPRIFKMAGFTTTEQQM) are periplasmic. The helical transmembrane segment at 298 to 318 (IATLVVGLTFMFATFIAVFTV) threads the bilayer. The Cytoplasmic portion of the chain corresponds to 319–325 (DKAGRKP). A helical membrane pass occupies residues 326-346 (ALKIGFSVMALGTLVLGYCLM). Residues 347-361 (QFDNGTASSGLSWLS) are Periplasmic-facing. A helical membrane pass occupies residues 362–382 (VGMTMMCIAGYAMSAAPVVWI). Residues 383-404 (LCSEIQPLKCRDFGITCSTTTN) are Cytoplasmic-facing. Transmembrane regions (helical) follow at residues 405–425 (WVSN…IGAA) and 426–446 (GTFW…FWLI). Topologically, residues 447 to 472 (PETKNVTLEHIERKLMAGEKLRNIGV) are cytoplasmic.

This sequence belongs to the major facilitator superfamily. Sugar transporter (TC 2.A.1.1) family.

Its subcellular location is the cell inner membrane. The catalysed reaction is L-arabinose(in) + H(+)(in) = L-arabinose(out) + H(+)(out). Functionally, uptake of L-arabinose across the cytoplasmic membrane with the concomitant transport of protons into the cell (symport system). This is Arabinose-proton symporter (araE) from Escherichia coli O157:H7.